The sequence spans 428 residues: C4-dicarboxylate transport protein (428 aa).

9 helical membrane passes run 4–24 (SLFK…ILLG), 44–64 (LIKM…IAGM), 76–96 (VALL…LIIV), 142–162 (IGAF…MFGF), 184–204 (VIFG…FGAM), 222–242 (LIVC…GSIA), 289–309 (VVGL…SIYL), 326–346 (IFHQ…AAGV), and 352–372 (IVLA…LALI).

The protein belongs to the dicarboxylate/amino acid:cation symporter (DAACS) (TC 2.A.23) family.

The protein localises to the cell inner membrane. Responsible for the transport of dicarboxylates such as succinate, fumarate, and malate from the periplasm across the membrane. This is C4-dicarboxylate transport protein from Citrobacter koseri (strain ATCC BAA-895 / CDC 4225-83 / SGSC4696).